The chain runs to 286 residues: CDP-diacylglycerol--serine O-phosphatidyltransferase (286 aa).

Transmembrane regions (helical) follow at residues I15–A35, I74–S94, M95–L115, E135–L155, G167–M187, and L207–I227.

The protein belongs to the CDP-alcohol phosphatidyltransferase class-I family.

The protein resides in the cell membrane. It catalyses the reaction a CDP-1,2-diacyl-sn-glycerol + L-serine = a 1,2-diacyl-sn-glycero-3-phospho-L-serine + CMP + H(+). The protein is CDP-diacylglycerol--serine O-phosphatidyltransferase (pssA) of Mycobacterium tuberculosis (strain ATCC 25618 / H37Rv).